Reading from the N-terminus, the 295-residue chain is Ribosomal protein L11 methyltransferase (295 aa).

S-adenosyl-L-methionine-binding residues include threonine 139, glycine 166, aspartate 188, and asparagine 231.

The protein belongs to the methyltransferase superfamily. PrmA family.

It is found in the cytoplasm. It catalyses the reaction L-lysyl-[protein] + 3 S-adenosyl-L-methionine = N(6),N(6),N(6)-trimethyl-L-lysyl-[protein] + 3 S-adenosyl-L-homocysteine + 3 H(+). In terms of biological role, methylates ribosomal protein L11. This Cyanothece sp. (strain PCC 7425 / ATCC 29141) protein is Ribosomal protein L11 methyltransferase.